We begin with the raw amino-acid sequence, 291 residues long: Small ribosomal subunit biogenesis GTPase RsgA (291 aa).

The CP-type G domain occupies 63 to 221 (ENELKRPPVS…IADTPGFSAL (159 aa)). Residues 112–115 (TKKD) and 164–172 (GQSGVGKST) each bind GTP. Zn(2+)-binding residues include Cys-245, Cys-250, His-252, and Cys-258.

Belongs to the TRAFAC class YlqF/YawG GTPase family. RsgA subfamily. As to quaternary structure, monomer. Associates with 30S ribosomal subunit, binds 16S rRNA. Zn(2+) serves as cofactor.

Its subcellular location is the cytoplasm. Its function is as follows. One of several proteins that assist in the late maturation steps of the functional core of the 30S ribosomal subunit. Helps release RbfA from mature subunits. May play a role in the assembly of ribosomal proteins into the subunit. Circularly permuted GTPase that catalyzes slow GTP hydrolysis, GTPase activity is stimulated by the 30S ribosomal subunit. The protein is Small ribosomal subunit biogenesis GTPase RsgA of Staphylococcus aureus (strain COL).